The chain runs to 103 residues: Large ribosomal subunit protein uL24 (103 aa).

The protein belongs to the universal ribosomal protein uL24 family. Part of the 50S ribosomal subunit.

One of two assembly initiator proteins, it binds directly to the 5'-end of the 23S rRNA, where it nucleates assembly of the 50S subunit. Functionally, one of the proteins that surrounds the polypeptide exit tunnel on the outside of the subunit. In Haemophilus influenzae (strain ATCC 51907 / DSM 11121 / KW20 / Rd), this protein is Large ribosomal subunit protein uL24.